The following is a 296-amino-acid chain: Nucleotide-binding protein RSc0403 (296 aa).

8–15 serves as a coordination point for ATP; the sequence is GMSGSGKS. 57–60 serves as a coordination point for GTP; that stretch reads DIRS. Residues 99-124 are disordered; it reads TRRRHPLSIRNGRPDAGNPPSAAKGP.

This sequence belongs to the RapZ-like family.

In terms of biological role, displays ATPase and GTPase activities. The protein is Nucleotide-binding protein RSc0403 of Ralstonia nicotianae (strain ATCC BAA-1114 / GMI1000) (Ralstonia solanacearum).